The sequence spans 217 residues: Large ribosomal subunit protein uL3 (217 aa).

Residues 134-154 (DATHGNSLSHRAPGSIGQCQT) are disordered. Q153 is subject to N5-methylglutamine.

The protein belongs to the universal ribosomal protein uL3 family. In terms of assembly, part of the 50S ribosomal subunit. Forms a cluster with proteins L14 and L19. Post-translationally, methylated by PrmB.

One of the primary rRNA binding proteins, it binds directly near the 3'-end of the 23S rRNA, where it nucleates assembly of the 50S subunit. The sequence is that of Large ribosomal subunit protein uL3 from Coxiella burnetii (strain Dugway 5J108-111).